A 334-amino-acid chain; its full sequence is Glyoxylate reductase (334 aa).

NADP(+) is bound by residues 158–161 (FGRI), 180–182 (SRT), and 239–241 (IAR). Catalysis depends on residues arginine 241 and glutamate 270. Histidine 288 serves as the catalytic Proton donor. 288–290 (HIG) is an NADP(+) binding site.

The protein belongs to the D-isomer specific 2-hydroxyacid dehydrogenase family. GyaR subfamily. Homodimer.

Its subcellular location is the cytoplasm. The enzyme catalyses glycolate + NAD(+) = glyoxylate + NADH + H(+). The protein is Glyoxylate reductase of Thermococcus gammatolerans (strain DSM 15229 / JCM 11827 / EJ3).